The chain runs to 156 residues: Endogenous retrovirus group K member 113 Pro protein (156 aa).

Residues 21–96 (FEGLVDTGAD…IPLNLWGRDL (76 aa)) form the Peptidase A2 domain. Asp26 is an active-site residue. In terms of domain architecture, G-patch spans 111–156 (YSPTSQKIMTKMGYIPGKGLGKNEDGIKIPVEAKINQKREGIGYPF).

It belongs to the peptidase A2 family. HERV class-II K(HML-2) subfamily. In terms of assembly, active as a homodimer. Autoproteolytically processed at the N-terminus. Expected C-terminal autoprocessing not detected. The sequence shown is that of the processed Pro protein.

The enzyme catalyses Processing at the authentic HIV-1 PR recognition site and release of the mature p17 matrix and the p24 capsid protein, as a result of the cleavage of the -SQNY-|-PIVQ- cleavage site.. In terms of biological role, retroviral proteases have roles in the processing of the primary translation products and the maturation of the viral particle. Endogenous Pro proteins may have kept, lost or modified their original function during evolution. This is Endogenous retrovirus group K member 113 Pro protein (HERVK_113) from Homo sapiens (Human).